Reading from the N-terminus, the 559-residue chain is Putative protease Do-like 3, mitochondrial (559 aa).

Residues 1 to 48 (MSFLCVRTVSRFRSLSRALAPGFLLLHGNAVPKTAVFFRQQSSNTRLF) constitute a mitochondrion transit peptide. Residues 59-81 (ENNSKSALKNKLPPGKEVSSKDA) form a disordered region. The tract at residues 100–292 (VFTVSSKPRL…FLNAIEESGE (193 aa)) is serine protease. Residues H138, D169, and S247 each act as charge relay system in the active site. Residues 300–380 (NLTYQKMDND…HLVSMKKPCE (81 aa)) enclose the PDZ domain. Residues 538 to 559 (SEDLQPKQQNKRSKVPPKSKEH) are disordered. A compositionally biased stretch (basic residues) spans 546–559 (QNKRSKVPPKSKEH).

The protein belongs to the peptidase S1C family.

It localises to the mitochondrion matrix. Its function is as follows. Putative serine protease. This is Putative protease Do-like 3, mitochondrial (DEGP3) from Arabidopsis thaliana (Mouse-ear cress).